Here is a 162-residue protein sequence, read N- to C-terminus: Large ribosomal subunit protein uL15 (162 aa).

Over residues 1–10 (MNLNELRDNA) the composition is skewed to basic and acidic residues. The tract at residues 1-39 (MNLNELRDNAGSRYRKKRLGRGIGSGKGKTSGKGVKGQK) is disordered. Gly residues predominate over residues 21–35 (RGIGSGKGKTSGKGV).

Belongs to the universal ribosomal protein uL15 family. In terms of assembly, part of the 50S ribosomal subunit.

Binds to the 23S rRNA. The polypeptide is Large ribosomal subunit protein uL15 (Gluconacetobacter diazotrophicus (strain ATCC 49037 / DSM 5601 / CCUG 37298 / CIP 103539 / LMG 7603 / PAl5)).